Here is a 455-residue protein sequence, read N- to C-terminus: Growth/differentiation factor 9 (455 aa).

Positions 1 to 24 (MALPNKFLLWFYCFAWLCFPVSLG) are cleaved as a signal peptide. A propeptide spanning residues 25 to 320 (SQASGGDAQI…GRSSHHRHRR (296 aa)) is cleaved from the precursor. 5 N-linked (GlcNAc...) asparagine glycosylation sites follow: N106, N163, N236, N255, and N269. The tract at residues 305–328 (EDAAEDGRSSHHRHRRGQETVSSE) is disordered. N-linked (GlcNAc...) asparagine glycosylation is present at N339. 3 cysteine pairs are disulfide-bonded: C354-C420, C383-C452, and C387-C454.

This sequence belongs to the TGF-beta family. Homodimer or heterodimer (Potential). But, in contrast to other members of this family, cannot be disulfide-linked. Post-translationally, phosphorylated; phosphorylation is critical for GDF9 function.

It localises to the secreted. In terms of biological role, required for ovarian folliculogenesis. The sequence is that of Growth/differentiation factor 9 (GDF9) from Papio anubis (Olive baboon).